The sequence spans 64 residues: MADESKFEQAKGNVKETVGNVTDNKNLENEGKEDKASGKAKEFVENAKEKATDFIDKVKGNKGE.

The segment at 1-40 (MADESKFEQAKGNVKETVGNVTDNKNLENEGKEDKASGKA) is disordered. Basic and acidic residues predominate over residues 25 to 40 (KNLENEGKEDKASGKA).

It belongs to the UPF0337 (CsbD) family.

The polypeptide is UPF0337 protein SAR0874 (Staphylococcus aureus (strain MRSA252)).